The following is a 644-amino-acid chain: Exoribonuclease 2 (644 aa).

The RNB domain maps to 189-516; sequence RQDLTALNFV…NHRLLKAVIK (328 aa). The region spanning 561-643 is the S1 motif domain; sequence NTRFAAEIID…ETRSIIARPA (83 aa).

Belongs to the RNR ribonuclease family. RNase II subfamily.

Its subcellular location is the cytoplasm. The catalysed reaction is Exonucleolytic cleavage in the 3'- to 5'-direction to yield nucleoside 5'-phosphates.. In terms of biological role, involved in mRNA degradation. Hydrolyzes single-stranded polyribonucleotides processively in the 3' to 5' direction. The sequence is that of Exoribonuclease 2 from Salmonella gallinarum (strain 287/91 / NCTC 13346).